Reading from the N-terminus, the 4017-residue chain is Hybrid PKS-NRPS synthetase cghG (4017 aa).

In terms of domain architecture, Ketosynthase family 3 (KS3) spans 6-438 (QEPIAVIGMA…GTNAHAIIES (433 aa)). Residues cysteine 179, histidine 318, and histidine 358 each act as for beta-ketoacyl synthase activity in the active site. The segment at 549 to 869 (VFTGQGAQWP…GRNKNDVVEL (321 aa)) is malonyl-CoA:ACP transacylase (MAT) domain. The N-terminal hotdog fold stretch occupies residues 936–1072 (NPILGRRCVE…ATLHVRFHEP (137 aa)). One can recognise a PKS/mFAS DH domain in the interval 936–1243 (NPILGRRCVE…VKPFAAATAR (308 aa)). Residues 937-1240 (PILGRRCVET…AVQVKPFAAA (304 aa)) form a dehydratase (DH) domain region. Histidine 969 (proton acceptor; for dehydratase activity) is an active-site residue. The tract at residues 1087 to 1243 (LVKTDPGRLY…VKPFAAATAR (157 aa)) is C-terminal hotdog fold. Aspartate 1147 acts as the Proton donor; for dehydratase activity in catalysis. The segment at 1398–1585 (VANVWIARMV…GVDTHCPVEK (188 aa)) is methyltransferase (MT) domain. Positions 2127–2300 (TYFLVGLSGE…XXXXXXXXXX (174 aa)) are ketoreductase (KR)domain. The region spanning 2423–2499 (AVVQDSLTEN…SLAEEAMAKI (77 aa)) is the Carrier 1 domain. Serine 2458 bears the O-(pantetheine 4'-phosphoryl)serine mark. Disordered stretches follow at residues 2547–2606 (VSEA…LQHR) and 2613–2632 (WAGS…AQRH). The segment covering 2548-2578 (SEASGVSATTPSTRAETDASSSPALVSTPGT) has biased composition (polar residues). Residues 2626–3020 (RRAAQRHETL…GDAMETEKLQ (395 aa)) form a condensation region. The adenylation stretch occupies residues 3053–3453 (EVIAQNPTAV…SGFLAIEGRI (401 aa)). The interval 3567-3586 (PKTTTASTTADGTQPAQPLT) is disordered. The segment covering 3569–3579 (TTTASTTADGT) has biased composition (low complexity). Positions 3583–3661 (QPLTPTESRL…SMAALLDQAG (79 aa)) constitute a Carrier 2 domain. A thiolation region spans residues 3588–3658 (TESRLATLWA…ELGSMAALLD (71 aa)). Serine 3621 carries the post-translational modification O-(pantetheine 4'-phosphoryl)serine. The segment at 3696-3920 (VTGASGSLGK…DVGRLEDVAA (225 aa)) is reductase-like.

It in the C-terminal section; belongs to the NRP synthetase family.

It carries out the reaction (2S,4S)-4-hydroxy-4-methylglutamate + 8 malonyl-CoA + 3 S-adenosyl-L-methionine + ATP + 8 NADPH + 11 H(+) = (2S)-3-[(2S)-3,5-dioxo-4-[(2E,4R,6R,8E,10E,12E)-4,6,12-trimethyltetradeca-2,8,10,12-tetraenoyl]pyrrolidin-2-yl]-2-hydroxy-2-methylpropanoate + AMP + 3 S-adenosyl-L-homocysteine + 8 CO2 + diphosphate + 8 NADP(+) + 8 CoA + 6 H2O. It participates in secondary metabolite biosynthesis. In terms of biological role, hybrid PKS-NRPS synthetase; part of the gene cluster that mediates the biosynthesis of the tetramic acid Sch210972, a potential anti-HIV fungal natural product that contains a decalin core. The PKS module of cghG together with the enoylreductase cghC catalyze the formation of the polyketide unit which is then conjugated to 4-hydroxyl-4-methyl glutamate (HMG) by the condensation domain of the cghG NRPS module. One unique structural feature of Sch210972 is the tetramic acid motif proposed to be derived from the non-proteinogenic amino acid HMG, by a Dieckmann-type condensation catalyzed by the reductase domain of cghG. The aldolase cghB catalyzes the aldol condensation of 2 molecules of pyruvic acid to yield the intermediate 4-hydroxyl-4-methyl-2-oxoglutarate (HMOG), which can then be stereoselectively transaminated by an unidentified enzyme to form HMG. The Diels-Alderase cghA then uses the Dieckmann product released by cghG as substrate and catalyzes the Diels-Alder cycloaddition to form the decalin ring of Sch210972. CghA also suppresses the nonenzymatic formation of the alternative stereoisomer. This chain is Hybrid PKS-NRPS synthetase cghG, found in Chaetomium globosum (strain ATCC 6205 / CBS 148.51 / DSM 1962 / NBRC 6347 / NRRL 1970) (Soil fungus).